A 250-amino-acid chain; its full sequence is Small ribosomal subunit protein uS3 (250 aa).

A KH type-2 domain is found at 16 to 85 (IDEYLEKELE…NPQIEVKEVS (70 aa)).

This sequence belongs to the universal ribosomal protein uS3 family. Part of the 30S ribosomal subunit.

In terms of biological role, binds the lower part of the 30S subunit head. The polypeptide is Small ribosomal subunit protein uS3 (Methanobrevibacter smithii (strain ATCC 35061 / DSM 861 / OCM 144 / PS)).